We begin with the raw amino-acid sequence, 204 residues long: Holliday junction branch migration complex subunit RuvA (204 aa).

The segment at 1-64 is domain I; it reads MIGKLKGTID…EDQLKLFGFM (64 aa). Residues 65-143 form a domain II region; that stretch reads TALEREWFNL…AFAGEAINIA (79 aa). Residues 144–151 form a flexible linker region; it reads LKQELGEG. The interval 152–204 is domain III; it reads VAAAPVADAVSALTNLGYSRDQAANAVAAAMKTAGDGADSAKLIRLGLKELAR.

It belongs to the RuvA family. Homotetramer. Forms an RuvA(8)-RuvB(12)-Holliday junction (HJ) complex. HJ DNA is sandwiched between 2 RuvA tetramers; dsDNA enters through RuvA and exits via RuvB. An RuvB hexamer assembles on each DNA strand where it exits the tetramer. Each RuvB hexamer is contacted by two RuvA subunits (via domain III) on 2 adjacent RuvB subunits; this complex drives branch migration. In the full resolvosome a probable DNA-RuvA(4)-RuvB(12)-RuvC(2) complex forms which resolves the HJ.

Its subcellular location is the cytoplasm. The RuvA-RuvB-RuvC complex processes Holliday junction (HJ) DNA during genetic recombination and DNA repair, while the RuvA-RuvB complex plays an important role in the rescue of blocked DNA replication forks via replication fork reversal (RFR). RuvA specifically binds to HJ cruciform DNA, conferring on it an open structure. The RuvB hexamer acts as an ATP-dependent pump, pulling dsDNA into and through the RuvAB complex. HJ branch migration allows RuvC to scan DNA until it finds its consensus sequence, where it cleaves and resolves the cruciform DNA. The protein is Holliday junction branch migration complex subunit RuvA of Rhizobium etli (strain CIAT 652).